A 660-amino-acid chain; its full sequence is DNA mismatch repair protein MutL (660 aa).

Belongs to the DNA mismatch repair MutL/HexB family.

In terms of biological role, this protein is involved in the repair of mismatches in DNA. It is required for dam-dependent methyl-directed DNA mismatch repair. May act as a 'molecular matchmaker', a protein that promotes the formation of a stable complex between two or more DNA-binding proteins in an ATP-dependent manner without itself being part of a final effector complex. This is DNA mismatch repair protein MutL from Streptococcus pyogenes serotype M1.